The primary structure comprises 50 residues: Kappa-actitoxin-Bcs4a (50 aa).

The protein belongs to the sea anemone type 5 potassium channel toxin family. Post-translationally, contains 4 disulfide bonds.

Its subcellular location is the secreted. It is found in the nematocyst. Functionally, inhibits voltage-gated potassium channels (Kv1/KCNA). Is potent on Drosophila Shaker IR channels (IC(50)=94.25 nM), and rKv1.2/KCNA2 (IC(50)=172.59 nM), and moderately active on hKv1.3/KCNA3 (IC(50)=1006.48 nM), rKv1.6/KCNA6 (IC(50)=2245.93 nM), and Kv1.1/KCNA1 (IC(50) around 3 uM). In vivo, induces a rapid increase in swimming speed on zebrafish larvae, as well as death which occurs between 2 and 18 hours later. Also paralyzes swimming crabs (C.danae) when injected at the junction between the body and the walking leg. This is Kappa-actitoxin-Bcs4a from Bunodosoma caissarum (Sea anemone).